The chain runs to 281 residues: ATP phosphoribosyltransferase (281 aa).

Belongs to the ATP phosphoribosyltransferase family. Long subfamily. It depends on Mg(2+) as a cofactor.

The protein localises to the cytoplasm. It catalyses the reaction 1-(5-phospho-beta-D-ribosyl)-ATP + diphosphate = 5-phospho-alpha-D-ribose 1-diphosphate + ATP. It participates in amino-acid biosynthesis; L-histidine biosynthesis; L-histidine from 5-phospho-alpha-D-ribose 1-diphosphate: step 1/9. With respect to regulation, feedback inhibited by histidine. Catalyzes the condensation of ATP and 5-phosphoribose 1-diphosphate to form N'-(5'-phosphoribosyl)-ATP (PR-ATP). Has a crucial role in the pathway because the rate of histidine biosynthesis seems to be controlled primarily by regulation of HisG enzymatic activity. The chain is ATP phosphoribosyltransferase from Salinispora tropica (strain ATCC BAA-916 / DSM 44818 / JCM 13857 / NBRC 105044 / CNB-440).